A 73-amino-acid chain; its full sequence is Stigmurin (73 aa).

Residues 1 to 22 (MQIKHLITLFFLVLIVADQCSA) form the signal peptide. At Lys39 the chain carries Lysine amide. The propeptide occupies 45 to 73 (EISAQIEQYKDLQKREAELEKLLDRLPMY).

This sequence belongs to the non-disulfide-bridged peptide (NDBP) superfamily. Short antimicrobial peptide (group 4) family. As to expression, expressed by the venom gland.

The protein resides in the secreted. In terms of biological role, antimicrobial peptide with activity against Gram-positive bacterial strains (S.aureus (MIC=2-140 uM), methicillin-resistant S.aureus (MRSA) (MIC=8-17 uM), S.epidermidis (MIC=1.17 uM), and the yeasts C.albicans, C.krusei, and C.glabrata (MIC=34-69 uM)). Acts by disrupting the cell membrane (observed on outer layer of the S.aureus). Is not active against Gram-negative bacteria (E.coli, E.Cloacae, P.aeruginosa), and the Gram-positive bacterium E.faecalis. Also shows toxicity against several cell lines, but possess low hemolytic activity at the highest concentration tested. Also shows antiparasitic activity against Trypanosoma cruzi by decreasing the viability of the epimastigote and trypomastigote forms of the parasite. Displays high hydroxyl radical scavenging activity (antioxidant action). In a wound infection model, the topical application of this peptide demonstrates antibacterial effects, as well as an ability to accelerate wound closure speed, which suggests the induction of tissue repair. In the model of polymicrobial sepsis, it exhibits an antibiotic effect, reducing the levels of microorganisms in the infectious focus and the inflammatory responses in the lung and cecum of septic animals. The sequence is that of Stigmurin from Tityus stigmurus (Brazilian scorpion).